The chain runs to 266 residues: Ribosomal RNA small subunit methyltransferase A (266 aa).

S-adenosyl-L-methionine-binding residues include Asn13, Leu15, Gly40, Glu61, Asp86, and Asn110.

Belongs to the class I-like SAM-binding methyltransferase superfamily. rRNA adenine N(6)-methyltransferase family. RsmA subfamily.

Its subcellular location is the cytoplasm. It carries out the reaction adenosine(1518)/adenosine(1519) in 16S rRNA + 4 S-adenosyl-L-methionine = N(6)-dimethyladenosine(1518)/N(6)-dimethyladenosine(1519) in 16S rRNA + 4 S-adenosyl-L-homocysteine + 4 H(+). In terms of biological role, specifically dimethylates two adjacent adenosines (A1518 and A1519) in the loop of a conserved hairpin near the 3'-end of 16S rRNA in the 30S particle. May play a critical role in biogenesis of 30S subunits. The sequence is that of Ribosomal RNA small subunit methyltransferase A from Hydrogenovibrio crunogenus (strain DSM 25203 / XCL-2) (Thiomicrospira crunogena).